A 1208-amino-acid polypeptide reads, in one-letter code: DNA-directed RNA polymerase subunit beta (1208 aa).

Belongs to the RNA polymerase beta chain family. As to quaternary structure, the RNAP catalytic core consists of 2 alpha, 1 beta, 1 beta' and 1 omega subunit. When a sigma factor is associated with the core the holoenzyme is formed, which can initiate transcription.

It catalyses the reaction RNA(n) + a ribonucleoside 5'-triphosphate = RNA(n+1) + diphosphate. DNA-dependent RNA polymerase catalyzes the transcription of DNA into RNA using the four ribonucleoside triphosphates as substrates. This is DNA-directed RNA polymerase subunit beta from Enterococcus faecium (Streptococcus faecium).